Here is a 4450-residue protein sequence, read N- to C-terminus: Gramicidin S synthase 2 (4450 aa).

The domain 1 (proline-activating) stretch occupies residues 467-1044; the sequence is DKTIHQLFTE…IQEISNYING (578 aa). Carrier domains are found at residues 971–1046, 2006–2081, 3051–3126, and 4089–4164; these read VPTN…NGAK, APSS…ADGE, APRT…EETD, and APRN…THQE. O-(pantetheine 4'-phosphoryl)serine occurs at positions 1006, 2041, 3086, and 4124. The segment at 1521 to 2080 is domain 2 (valine-activating); that stretch reads DHVAVGWKDQ…SALAQYIADG (560 aa). The tract at residues 2538-3134 is domain 3 (ornithine-activating); the sequence is YATNKIFHEL…TDTEQYMAIQ (597 aa). Positions 3590–4172 are domain 4 (leucine-activating); that stretch reads IQELFEEQVK…QESENNVHQP (583 aa).

Belongs to the ATP-dependent AMP-binding enzyme family. In terms of assembly, large multienzyme complex of GrsA and GrsB. Requires pantetheine 4'-phosphate as cofactor.

Its pathway is antibiotic biosynthesis; gramicidin S biosynthesis. In terms of biological role, this protein is a multifunctional enzyme, able to activate and polymerize the amino acids Pro, Val, Orn and Leu. Activation sites for these AA consist of individual domains. This Brevibacillus brevis (Bacillus brevis) protein is Gramicidin S synthase 2 (grsB).